A 339-amino-acid chain; its full sequence is Phenylalanine--tRNA ligase alpha subunit (339 aa).

Glutamate 254 lines the Mg(2+) pocket.

The protein belongs to the class-II aminoacyl-tRNA synthetase family. Phe-tRNA synthetase alpha subunit type 1 subfamily. As to quaternary structure, tetramer of two alpha and two beta subunits. Mg(2+) serves as cofactor.

It is found in the cytoplasm. It carries out the reaction tRNA(Phe) + L-phenylalanine + ATP = L-phenylalanyl-tRNA(Phe) + AMP + diphosphate + H(+). The chain is Phenylalanine--tRNA ligase alpha subunit from Clostridium novyi (strain NT).